Consider the following 265-residue polypeptide: uncharacterized protein (265 aa).

Positions 1 to 22 (MGYFKRVLLYIIVMVLSVFIIG) are cleaved as a signal peptide. C23 is lipidated: N-palmitoyl cysteine. Residue C23 is the site of S-diacylglycerol cysteine attachment.

This sequence belongs to the staphylococcal tandem lipoprotein family.

Its subcellular location is the cell membrane. This is an uncharacterized protein from Staphylococcus aureus (strain MSSA476).